We begin with the raw amino-acid sequence, 158 residues long: NAD(P)H-quinone oxidoreductase subunit J, chloroplastic (158 aa).

Belongs to the complex I 30 kDa subunit family. In terms of assembly, NDH is composed of at least 16 different subunits, 5 of which are encoded in the nucleus.

It localises to the plastid. The protein localises to the chloroplast thylakoid membrane. The catalysed reaction is a plastoquinone + NADH + (n+1) H(+)(in) = a plastoquinol + NAD(+) + n H(+)(out). It carries out the reaction a plastoquinone + NADPH + (n+1) H(+)(in) = a plastoquinol + NADP(+) + n H(+)(out). Its function is as follows. NDH shuttles electrons from NAD(P)H:plastoquinone, via FMN and iron-sulfur (Fe-S) centers, to quinones in the photosynthetic chain and possibly in a chloroplast respiratory chain. The immediate electron acceptor for the enzyme in this species is believed to be plastoquinone. Couples the redox reaction to proton translocation, and thus conserves the redox energy in a proton gradient. In Platanus occidentalis (Sycamore), this protein is NAD(P)H-quinone oxidoreductase subunit J, chloroplastic.